A 504-amino-acid polypeptide reads, in one-letter code: Anaerobic nitric oxide reductase transcription regulator NorR (504 aa).

Position 57 is a 4-aspartylphosphate (Asp-57). Positions 187–416 (MIGLSPGMTQ…LEHAIHRAVV (230 aa)) constitute a Sigma-54 factor interaction domain. ATP-binding positions include 215–222 (GETGTGKE) and 278–287 (ADNGTLFLDE). Positions 479–498 (WAACARMLETDVANLHRLAK) form a DNA-binding region, H-T-H motif.

It participates in nitrogen metabolism; nitric oxide reduction. Its function is as follows. Required for the expression of anaerobic nitric oxide (NO) reductase, acts as a transcriptional activator for at least the norVW operon. Activation also requires sigma-54. This chain is Anaerobic nitric oxide reductase transcription regulator NorR, found in Escherichia coli O8 (strain IAI1).